Consider the following 434-residue polypeptide: D-amino acid dehydrogenase (434 aa).

3-17 (VVILGSGVVGVTSAW) provides a ligand contact to FAD.

This sequence belongs to the DadA oxidoreductase family. FAD serves as cofactor.

It carries out the reaction a D-alpha-amino acid + A + H2O = a 2-oxocarboxylate + AH2 + NH4(+). It participates in amino-acid degradation; D-alanine degradation; NH(3) and pyruvate from D-alanine: step 1/1. Its function is as follows. Oxidative deamination of D-amino acids. The chain is D-amino acid dehydrogenase from Yersinia pseudotuberculosis serotype O:1b (strain IP 31758).